A 120-amino-acid chain; its full sequence is NAD(P)H-quinone oxidoreductase subunit 3, chloroplastic (120 aa).

Helical transmembrane passes span 9–29, 64–84, and 89–109; these read YFWL…PISS, MFAS…PWAM, and LGVP…VGSV.

This sequence belongs to the complex I subunit 3 family. NDH is composed of at least 16 different subunits, 5 of which are encoded in the nucleus.

Its subcellular location is the plastid. It is found in the chloroplast thylakoid membrane. It catalyses the reaction a plastoquinone + NADH + (n+1) H(+)(in) = a plastoquinol + NAD(+) + n H(+)(out). It carries out the reaction a plastoquinone + NADPH + (n+1) H(+)(in) = a plastoquinol + NADP(+) + n H(+)(out). Its function is as follows. NDH shuttles electrons from NAD(P)H:plastoquinone, via FMN and iron-sulfur (Fe-S) centers, to quinones in the photosynthetic chain and possibly in a chloroplast respiratory chain. The immediate electron acceptor for the enzyme in this species is believed to be plastoquinone. Couples the redox reaction to proton translocation, and thus conserves the redox energy in a proton gradient. The sequence is that of NAD(P)H-quinone oxidoreductase subunit 3, chloroplastic from Huperzia lucidula (Shining clubmoss).